A 223-amino-acid chain; its full sequence is Endonuclease V (223 aa).

Mg(2+) contacts are provided by Asp-35 and Asp-103.

Belongs to the endonuclease V family. Mg(2+) is required as a cofactor.

The protein resides in the cytoplasm. It catalyses the reaction Endonucleolytic cleavage at apurinic or apyrimidinic sites to products with a 5'-phosphate.. Its function is as follows. DNA repair enzyme involved in the repair of deaminated bases. Selectively cleaves double-stranded DNA at the second phosphodiester bond 3' to a deoxyinosine leaving behind the intact lesion on the nicked DNA. This Klebsiella pneumoniae subsp. pneumoniae (strain ATCC 700721 / MGH 78578) protein is Endonuclease V.